A 312-amino-acid polypeptide reads, in one-letter code: Adenylyl-sulfate kinase, chloroplastic (312 aa).

142–149 (GLSGSGKS) contributes to the ATP binding site. Serine 216 functions as the Phosphoserine intermediate in the catalytic mechanism.

The protein belongs to the APS kinase family.

Its subcellular location is the plastid. The protein localises to the chloroplast. It carries out the reaction adenosine 5'-phosphosulfate + ATP = 3'-phosphoadenylyl sulfate + ADP + H(+). The protein operates within sulfur metabolism; hydrogen sulfide biosynthesis; sulfite from sulfate: step 2/3. In terms of biological role, catalyzes the synthesis of activated sulfate. This chain is Adenylyl-sulfate kinase, chloroplastic (AKN), found in Catharanthus roseus (Madagascar periwinkle).